The following is a 154-amino-acid chain: Large ribosomal subunit protein bL17 (154 aa).

Residues 127-154 (TAAKQDRAKRVKGSKKAETEKEGGESAE) are disordered. Over residues 141-154 (KKAETEKEGGESAE) the composition is skewed to basic and acidic residues.

Belongs to the bacterial ribosomal protein bL17 family. In terms of assembly, part of the 50S ribosomal subunit. Contacts protein L32.

This Chlorobaculum parvum (strain DSM 263 / NCIMB 8327) (Chlorobium vibrioforme subsp. thiosulfatophilum) protein is Large ribosomal subunit protein bL17.